Here is a 932-residue protein sequence, read N- to C-terminus: Alanine--tRNA ligase (932 aa).

Zn(2+) contacts are provided by histidine 623, histidine 627, cysteine 726, and histidine 730. The segment at 893–916 is disordered; the sequence is RVGGGGGGPPDFAQGGGPDVDSLD. The span at 894–910 shows a compositional bias: gly residues; sequence VGGGGGGPPDFAQGGGP.

Belongs to the class-II aminoacyl-tRNA synthetase family. Requires Zn(2+) as cofactor.

Its subcellular location is the cytoplasm. It catalyses the reaction tRNA(Ala) + L-alanine + ATP = L-alanyl-tRNA(Ala) + AMP + diphosphate. In terms of biological role, catalyzes the attachment of alanine to tRNA(Ala) in a two-step reaction: alanine is first activated by ATP to form Ala-AMP and then transferred to the acceptor end of tRNA(Ala). Also edits incorrectly charged Ser-tRNA(Ala) and Gly-tRNA(Ala) via its editing domain. The polypeptide is Alanine--tRNA ligase (Natronomonas pharaonis (strain ATCC 35678 / DSM 2160 / CIP 103997 / JCM 8858 / NBRC 14720 / NCIMB 2260 / Gabara) (Halobacterium pharaonis)).